The primary structure comprises 288 residues: Quinate/shikimate dehydrogenase (288 aa).

Substrate is bound by residues Lys71 and Asp107. Residues 132 to 135, 155 to 158, Lys205, 232 to 235, and Gly255 contribute to the NAD(+) site; these read AGGA, NRRD, and CVYN.

This sequence belongs to the shikimate dehydrogenase family. Homodimer.

The enzyme catalyses L-quinate + NAD(+) = 3-dehydroquinate + NADH + H(+). The catalysed reaction is L-quinate + NADP(+) = 3-dehydroquinate + NADPH + H(+). It catalyses the reaction shikimate + NADP(+) = 3-dehydroshikimate + NADPH + H(+). It carries out the reaction shikimate + NAD(+) = 3-dehydroshikimate + NADH + H(+). It participates in metabolic intermediate biosynthesis; chorismate biosynthesis; chorismate from D-erythrose 4-phosphate and phosphoenolpyruvate: step 4/7. The actual biological function of YdiB remains unclear, nor is it known whether 3-dehydroshikimate or quinate represents the natural substrate. Catalyzes the reversible NAD-dependent reduction of both 3-dehydroshikimate (DHSA) and 3-dehydroquinate to yield shikimate (SA) and quinate, respectively. It can use both NAD or NADP for catalysis, however it has higher catalytic efficiency with NAD. The chain is Quinate/shikimate dehydrogenase from Escherichia coli (strain SMS-3-5 / SECEC).